The primary structure comprises 272 residues: Cell wall synthesis protein Wag31 (272 aa).

2 disordered regions span residues 1–22 (MPLT…GKRG) and 62–109 (AARS…SEDT). Residues 30–67 (AFLDLVENELTRLIEENADLRQRVAELDQELAAARSGA) adopt a coiled-coil conformation. 2 stretches are compositionally biased toward low complexity: residues 62–76 (AARS…ATSS) and 94–105 (VYEAPAQPAAPQ). At Thr-74 the chain carries Phosphothreonine. A coiled-coil region spans residues 139–206 (LSDARAQAEA…AERKHSEIMG (68 aa)). The tract at residues 243–272 (ELGQRGSAAPVDSSANSDASGFGQFNRGNN) is disordered.

The protein belongs to the DivIVA family. As to quaternary structure, forms homooligomers. Interacts with PbpB and CwsA. Post-translationally, phosphorylated by PknA.

Its subcellular location is the cytoplasm. Its function is as follows. Important for maintaining cell shape and cell wall integrity by localizing peptidoglycan synthesis to the cell poles. Protects PbpB (PBP3, FtsI) from oxidative stress-induced cleavage. In Mycolicibacterium smegmatis (strain ATCC 700084 / mc(2)155) (Mycobacterium smegmatis), this protein is Cell wall synthesis protein Wag31 (wag31).